The primary structure comprises 41 residues: Competence-stimulating peptide type 2 (41 aa).

Positions 1 to 24 (MKNTVKLEQFVALKEKDLQKIKGG) are excised as a propeptide.

Belongs to the ComC family.

The protein localises to the secreted. Acts as a pheromone, induces cells to develop competence for genetic transformation. This Streptococcus pneumoniae serotype 4 (strain ATCC BAA-334 / TIGR4) protein is Competence-stimulating peptide type 2 (comC2).